Reading from the N-terminus, the 138-residue chain is Small ribosomal subunit protein uS9c (138 aa).

Belongs to the universal ribosomal protein uS9 family.

The protein resides in the plastid. It is found in the chloroplast. This Trieres chinensis (Marine centric diatom) protein is Small ribosomal subunit protein uS9c (rps9).